We begin with the raw amino-acid sequence, 1529 residues long: DNA-directed RNA polymerase subunit beta' (1529 aa).

Positions 156, 158, 183, and 186 each coordinate Zn(2+). Mg(2+)-binding residues include Asp1328, Asp1330, and Asp1332.

This sequence belongs to the RNA polymerase beta' chain family. RpoC1 subfamily. In terms of assembly, in plastids the minimal PEP RNA polymerase catalytic core is composed of four subunits: alpha, beta, beta', and beta''. When a (nuclear-encoded) sigma factor is associated with the core the holoenzyme is formed, which can initiate transcription. Mg(2+) serves as cofactor. Zn(2+) is required as a cofactor.

It localises to the plastid. It is found in the chloroplast. It catalyses the reaction RNA(n) + a ribonucleoside 5'-triphosphate = RNA(n+1) + diphosphate. Functionally, DNA-dependent RNA polymerase catalyzes the transcription of DNA into RNA using the four ribonucleoside triphosphates as substrates. This chain is DNA-directed RNA polymerase subunit beta', found in Tetradesmus obliquus (Green alga).